A 1243-amino-acid chain; its full sequence is Inositol hexakisphosphate and diphosphoinositol-pentakisphosphate kinase 2 (1243 aa).

A Phosphoserine modification is found at serine 38. 53 to 54 (KK) serves as a coordination point for substrate. 4 residues coordinate ATP: arginine 134, lysine 187, histidine 194, and arginine 213. 213–214 (RK) lines the substrate pocket. At serine 223 the chain carries Phosphoserine. ATP is bound by residues 237-240 (EEFM) and 246-248 (DVK). Substrate contacts are provided by lysine 248 and arginine 262. ATP contacts are provided by residues serine 264, aspartate 309, and 321 to 323 (DVN). Position 326–329 (326–329 (SFVK)) interacts with substrate. Residues 371 to 442 (PTTSGTMMEL…VLDIARQLLM (72 aa)) form a polyphosphoinositide-binding domain region. Disordered stretches follow at residues 898–941 (KGCE…RDEV) and 957–1016 (HIHR…SPVS). Basic and acidic residues predominate over residues 915–941 (ASRENEGRRPFKIDNDDEPHTSKRDEV). A compositionally biased stretch (basic residues) spans 958–969 (IHRKSPLPRSRK). A phosphoserine mark is found at serine 1006, serine 1016, serine 1074, serine 1091, serine 1165, serine 1172, and serine 1180. Positions 1185-1243 (TPAKILPTPPATLKSTKASSKPATSGPSSAVVPNTSSRKKNITSKTETHEHKKNTGKKK) are disordered. The span at 1195 to 1209 (ATLKSTKASSKPATS) shows a compositional bias: low complexity. A compositionally biased stretch (polar residues) spans 1210 to 1220 (GPSSAVVPNTS). Phosphoserine occurs at positions 1220 and 1221.

It belongs to the histidine acid phosphatase family. VIP1 subfamily.

The protein localises to the cytoplasm. The protein resides in the cytosol. The catalysed reaction is 1D-myo-inositol hexakisphosphate + ATP = 1-diphospho-1D-myo-inositol 2,3,4,5,6-pentakisphosphate + ADP. It carries out the reaction 5-diphospho-1D-myo-inositol 1,2,3,4,6-pentakisphosphate + ATP + H(+) = 1,5-bis(diphospho)-1D-myo-inositol 2,3,4,6-tetrakisphosphate + ADP. In terms of biological role, bifunctional inositol kinase that acts in concert with the IP6K kinases IP6K1, IP6K2 and IP6K3 to synthesize the diphosphate group-containing inositol pyrophosphates diphosphoinositol pentakisphosphate, PP-InsP5, and bis-diphosphoinositol tetrakisphosphate, (PP)2-InsP4. PP-InsP5 and (PP)2-InsP4, also respectively called InsP7 and InsP8, regulate a variety of cellular processes, including apoptosis, vesicle trafficking, cytoskeletal dynamics, exocytosis, insulin signaling and neutrophil activation. Phosphorylates inositol hexakisphosphate (InsP6) at position 1 to produce PP-InsP5 which is in turn phosphorylated by IP6Ks to produce (PP)2-InsP4. Alternatively, phosphorylates PP-InsP5 at position 1, produced by IP6Ks from InsP6, to produce (PP)2-InsP4. Required for normal hearing. The polypeptide is Inositol hexakisphosphate and diphosphoinositol-pentakisphosphate kinase 2 (Homo sapiens (Human)).